Consider the following 1064-residue polypeptide: Carbamoyl phosphate synthase pyrimidine-specific large chain (1064 aa).

Residues 1 to 401 (MPKRRDIETI…SLLKAVRSLE (401 aa)) are carboxyphosphate synthetic domain. The ATP site is built by arginine 129, arginine 169, glycine 175, glycine 176, arginine 208, isoleucine 210, glycine 241, isoleucine 242, histidine 243, glutamine 284, and glutamate 298. Residues 133 to 327 (RALMNELGEP…IAKLAAKIAV (195 aa)) form the ATP-grasp 1 domain. Residues glutamine 284, glutamate 298, and asparagine 300 each coordinate Mg(2+). 3 residues coordinate Mn(2+): glutamine 284, glutamate 298, and asparagine 300. The oligomerization domain stretch occupies residues 402-546 (IGVHHLELNE…YSTYEEENES (145 aa)). The segment at 547-929 (IVTEKPSVIV…ALYKGLVASG (383 aa)) is carbamoyl phosphate synthetic domain. The 191-residue stretch at 671–861 (EQALSELGIP…MANLATKAIL (191 aa)) folds into the ATP-grasp 2 domain. ATP is bound by residues arginine 707, arginine 746, isoleucine 748, glutamate 752, glycine 777, valine 778, histidine 779, serine 780, glutamine 820, and glutamate 832. Residues glutamine 820, glutamate 832, and asparagine 834 each contribute to the Mg(2+) site. Mn(2+) is bound by residues glutamine 820, glutamate 832, and asparagine 834. The region spanning 930-1064 (IQIQPHGAVL…TAMTEGLVRS (135 aa)) is the MGS-like domain. The tract at residues 930-1064 (IQIQPHGAVL…TAMTEGLVRS (135 aa)) is allosteric domain.

It belongs to the CarB family. Composed of two chains; the small (or glutamine) chain promotes the hydrolysis of glutamine to ammonia, which is used by the large (or ammonia) chain to synthesize carbamoyl phosphate. Tetramer of heterodimers (alpha,beta)4. Mg(2+) is required as a cofactor. The cofactor is Mn(2+).

It carries out the reaction hydrogencarbonate + L-glutamine + 2 ATP + H2O = carbamoyl phosphate + L-glutamate + 2 ADP + phosphate + 2 H(+). The catalysed reaction is hydrogencarbonate + NH4(+) + 2 ATP = carbamoyl phosphate + 2 ADP + phosphate + 2 H(+). It functions in the pathway amino-acid biosynthesis; L-arginine biosynthesis; carbamoyl phosphate from bicarbonate: step 1/1. It participates in pyrimidine metabolism; UMP biosynthesis via de novo pathway; (S)-dihydroorotate from bicarbonate: step 1/3. In terms of biological role, small subunit of the glutamine-dependent carbamoyl phosphate synthetase (CPSase). CPSase catalyzes the formation of carbamoyl phosphate from the ammonia moiety of glutamine, carbonate, and phosphate donated by ATP, constituting the first step of the biosynthetic pathway leading to pyrimidine nucleotides. The large subunit (synthetase) binds the substrates ammonia (free or transferred from glutamine from the small subunit), hydrogencarbonate and ATP and carries out an ATP-coupled ligase reaction, activating hydrogencarbonate by forming carboxy phosphate which reacts with ammonia to form carbamoyl phosphate. This chain is Carbamoyl phosphate synthase pyrimidine-specific large chain (pyrAB), found in Geobacillus stearothermophilus (Bacillus stearothermophilus).